The sequence spans 451 residues: Glucose-6-phosphate isomerase (451 aa).

Glu-291 acts as the Proton donor in catalysis. Residues His-312 and Lys-426 contribute to the active site.

Belongs to the GPI family.

It is found in the cytoplasm. It catalyses the reaction alpha-D-glucose 6-phosphate = beta-D-fructose 6-phosphate. Its pathway is carbohydrate biosynthesis; gluconeogenesis. The protein operates within carbohydrate degradation; glycolysis; D-glyceraldehyde 3-phosphate and glycerone phosphate from D-glucose: step 2/4. Functionally, catalyzes the reversible isomerization of glucose-6-phosphate to fructose-6-phosphate. This chain is Glucose-6-phosphate isomerase, found in Thermoanaerobacter sp. (strain X514).